The sequence spans 326 residues: ELAV-like protein 1-B (326 aa).

RRM domains are found at residues 20–98 (TNLI…FARP), 106–186 (ANLY…FAAN), and 244–322 (WCIF…FKTS).

This sequence belongs to the RRM elav family. In terms of assembly, interacts (via RRM3) with cirbp. Unable to form oligomers. Part of a ribonucleoprotein (RNP) complex, at least composed of elavl1/elrA and/or elavl2/elrB, igf2bp3/vg1RBP, ddx6/Xp54, ybx2/frgy2, lsm14b/rap55b and, in a subset of RNP complexes, stau1/staufen.

The protein localises to the cytoplasm. It is found in the cell cortex. RNA-binding protein that binds to the 3'-UTR region of mRNAs and increases their stability. Involved in embryonic stem cells (ESCs) differentiation: preferentially binds mRNAs that are not methylated by N6-methyladenosine (m6A), stabilizing them, promoting ESCs differentiation. Binds to poly-U elements and AU-rich elements (AREs) in the 3'-UTR of target mRNAs. Acts cooperatively with cribp to stabilize AU-rich sequence (ARE)-containing mRNAs. May play a role during gastrulation. Required for the vegetal localization of vg1 mRNA. In Xenopus laevis (African clawed frog), this protein is ELAV-like protein 1-B (elavl1-b).